The sequence spans 253 residues: Demethylmenaquinone methyltransferase (253 aa).

S-adenosyl-L-methionine contacts are provided by residues T75, D96, and 124-125; that span reads DA.

The protein belongs to the class I-like SAM-binding methyltransferase superfamily. MenG/UbiE family.

The catalysed reaction is a 2-demethylmenaquinol + S-adenosyl-L-methionine = a menaquinol + S-adenosyl-L-homocysteine + H(+). The protein operates within quinol/quinone metabolism; menaquinone biosynthesis; menaquinol from 1,4-dihydroxy-2-naphthoate: step 2/2. In terms of biological role, methyltransferase required for the conversion of demethylmenaquinol (DMKH2) to menaquinol (MKH2). In Desulfitobacterium hafniense (strain Y51), this protein is Demethylmenaquinone methyltransferase.